Consider the following 78-residue polypeptide: Apolipoprotein C-I (78 aa).

The first 26 residues, 1-26 (MRLILCLPVLVVVLLMVLEGPAPAQG), serve as a signal peptide directing secretion.

The protein belongs to the apolipoprotein C1 family.

It localises to the secreted. In terms of biological role, inhibitor of lipoprotein binding to the low density lipoprotein (LDL) receptor, LDL receptor-related protein, and very low density lipoprotein (VLDL) receptor. Associates with high density lipoproteins (HDL) and the triacylglycerol-rich lipoproteins in the plasma and makes up about 10% of the protein of the VLDL and 2% of that of HDL. Appears to interfere directly with fatty acid uptake and is also the major plasma inhibitor of cholesteryl ester transfer protein (CETP). Binds free fatty acids and reduces their intracellular esterification. Modulates the interaction of APOE with beta-migrating VLDL and inhibits binding of beta-VLDL to the LDL receptor-related protein. The chain is Apolipoprotein C-I (APOC1) from Acinonyx jubatus (Cheetah).